Reading from the N-terminus, the 956-residue chain is Plasma membrane ATPase 3 (956 aa).

Over 1–65 the chain is Cytoplasmic; that stretch reads MGEKPEVLDA…EKKESKFSKF (65 aa). Residues 66–85 traverse the membrane as a helical segment; it reads LGFMWNPLSWVMEAAAIMAI. The Extracellular segment spans residues 86-97; that stretch reads ALANGGGKPPDW. The helical transmembrane segment at 98–118 threads the bilayer; the sequence is QDFVGIITLLIINSTISFIEE. The Cytoplasmic segment spans residues 119 to 247; it reads NNAGNAAAAL…GHFQKVLTAI (129 aa). Residues 248–268 traverse the membrane as a helical segment; that stretch reads GNFCICSIAVGMIIEIIVMYP. Topologically, residues 269–278 are extracellular; the sequence is IQHRKYRPGI. The helical transmembrane segment at 279–300 threads the bilayer; that stretch reads DNLLVLLIGGIPIAMPTVLSVT. Residues 301-647 are Cytoplasmic-facing; the sequence is MAIGSHRLAQ…TSRAIFQRMK (347 aa). D333 functions as the 4-aspartylphosphate intermediate in the catalytic mechanism. Residues D592 and D596 each contribute to the Mg(2+) site. The chain crosses the membrane as a helical span at residues 648–669; it reads NYTIYAVSITIRIVLGFMLLAL. Residues 670-674 lie on the Extracellular side of the membrane; sequence IWQFD. Residues 675–697 traverse the membrane as a helical segment; that stretch reads FPPFMVLIIAILNDGTIMTISKD. The Cytoplasmic portion of the chain corresponds to 698-713; the sequence is RVKPSPLPDSWKLAEI. Residues 714–734 traverse the membrane as a helical segment; sequence FTTGVVLGGYLAMMTVIFFWA. The Extracellular portion of the chain corresponds to 735-759; the sequence is AYKTNFFPRVFGVSTLEKTATDDFR. Residues 760 to 780 traverse the membrane as a helical segment; that stretch reads KLASAIYLQVSTISQALIFVT. Over 781–792 the chain is Cytoplasmic; the sequence is RSRSWSFMERPG. The helical transmembrane segment at 793–813 threads the bilayer; the sequence is LLLVVAFFIAQLVATLIAVYA. Over 814-822 the chain is Extracellular; sequence NWSFAAIEG. A helical transmembrane segment spans residues 823 to 843; sequence IGWGWAGVIWLYNIVFYIPLD. Topologically, residues 844–956 are cytoplasmic; that stretch reads LXXFLIRYAL…IETIQQAYTV (113 aa).

This sequence belongs to the cation transport ATPase (P-type) (TC 3.A.3) family. Type IIIA subfamily. Expressed in roots, stems, leaves from both vegetative and flowering plants, and flowers at early and late stages of development with highest expression levels found in flowers and root tissue.

The protein resides in the cell membrane. It carries out the reaction ATP + H2O + H(+)(in) = ADP + phosphate + 2 H(+)(out). Its function is as follows. The plasma membrane ATPase of plants and fungi is a hydrogen ion pump. The proton gradient it generates drives the active transport of nutrients by H(+)-symport. The resulting external acidification and/or internal alkinization may mediate growth responses. The chain is Plasma membrane ATPase 3 (PMA3) from Nicotiana plumbaginifolia (Leadwort-leaved tobacco).